The primary structure comprises 251 residues: D-aminoacyl-tRNA deacylase (251 aa).

Belongs to the DtdA deacylase family. In terms of assembly, monomer. It depends on Zn(2+) as a cofactor.

The enzyme catalyses a D-aminoacyl-tRNA + H2O = a tRNA + a D-alpha-amino acid + H(+). It carries out the reaction glycyl-tRNA(Ala) + H2O = tRNA(Ala) + glycine + H(+). In terms of biological role, D-aminoacyl-tRNA deacylase with broad substrate specificity. By recycling D-aminoacyl-tRNA to D-amino acids and free tRNA molecules, this enzyme counteracts the toxicity associated with the formation of D-aminoacyl-tRNA entities in vivo. This is D-aminoacyl-tRNA deacylase from Pyrobaculum calidifontis (strain DSM 21063 / JCM 11548 / VA1).